A 436-amino-acid chain; its full sequence is MSVTTQEKDLSYKVKDLSQAEWGRQEIILAEKEMPGLMALRQEYKGKKPLAGARIAGSLHMTIQTAVLIETLTELGAEVRWSSCNIFSTQDHAAAAIAKAGIPVFAWKGETEEEYWWCIEQTIFFGDKGPNMILDDGGDLTAYIHEKYPKLLSEIRGISEETTTGVKSLYKLLKKGELKVPAFNVNDSVTKSKFDNLYGCRESLADGIKRATDVMLAGKVALVCGFGDVGKGSAASLRNFGARVIVTEIDPICALQASMEGYQVLRVEDIIEQVDIVVTATGNDDIITLEHMKAMKDGAILCNIGHFDTEIQMSRLNNEKGVTKKEIKPQVDKYTFPDGKSIIVLAEGRLVNLGCATGHPSFVMSCSFTNQVLAQIELYNNKYELGVYTLPKHLDEKVAALHLEQLGVRLTKLNQKQADYLGVPINGPFKPDHYRY.

Substrate contacts are provided by Thr62, Asp136, and Glu161. 162-164 serves as a coordination point for NAD(+); sequence TTT. Substrate is bound by residues Lys191 and Asp195. NAD(+)-binding positions include Asn196, 225–230, Glu248, Asn283, 304–306, and Asn352; these read GFGDVG and IGH.

The protein belongs to the adenosylhomocysteinase family. NAD(+) is required as a cofactor.

Its subcellular location is the cytoplasm. It catalyses the reaction S-adenosyl-L-homocysteine + H2O = L-homocysteine + adenosine. The protein operates within amino-acid biosynthesis; L-homocysteine biosynthesis; L-homocysteine from S-adenosyl-L-homocysteine: step 1/1. Functionally, may play a key role in the regulation of the intracellular concentration of adenosylhomocysteine. The polypeptide is Adenosylhomocysteinase (Leptospira interrogans serogroup Icterohaemorrhagiae serovar copenhageni (strain Fiocruz L1-130)).